The sequence spans 177 residues: Large ribosomal subunit protein uL6 (177 aa).

It belongs to the universal ribosomal protein uL6 family. As to quaternary structure, part of the 50S ribosomal subunit.

Its function is as follows. This protein binds to the 23S rRNA, and is important in its secondary structure. It is located near the subunit interface in the base of the L7/L12 stalk, and near the tRNA binding site of the peptidyltransferase center. The sequence is that of Large ribosomal subunit protein uL6 from Methylocella silvestris (strain DSM 15510 / CIP 108128 / LMG 27833 / NCIMB 13906 / BL2).